Consider the following 226-residue polypeptide: Late expression factor 7 (226 aa).

The F-box domain maps to Arg9–Leu58.

As to quaternary structure, interacts with host S-phase kinase-associated protein 1/SKP1.

The protein localises to the host nucleus. It participates in protein degradation; proteasomal ubiquitin-dependent pathway. Functionally, F-box protein that manipulates the host DNA damage response (DRR) in order to promote viral multiplication. Acts as a substrate recognition component of SKP1/Cullin/F-box (SCF) complexes for targeted protein polyubiquitination. The chain is Late expression factor 7 (LEF-7) from Lepidoptera (butterflies and moths).